A 139-amino-acid chain; its full sequence is ATP synthase epsilon chain (139 aa).

The protein belongs to the ATPase epsilon chain family. In terms of assembly, F-type ATPases have 2 components, CF(1) - the catalytic core - and CF(0) - the membrane proton channel. CF(1) has five subunits: alpha(3), beta(3), gamma(1), delta(1), epsilon(1). CF(0) has three main subunits: a, b and c.

It localises to the cell inner membrane. Functionally, produces ATP from ADP in the presence of a proton gradient across the membrane. This is ATP synthase epsilon chain from Acinetobacter baylyi (strain ATCC 33305 / BD413 / ADP1).